The sequence spans 261 residues: Glucose 1-dehydrogenase 2 (261 aa).

V11–V35 contributes to the NADP(+) binding site. S145 lines the substrate pocket. Y158 acts as the Proton acceptor in catalysis.

This sequence belongs to the short-chain dehydrogenases/reductases (SDR) family. Homotetramer.

The catalysed reaction is D-glucose + NAD(+) = D-glucono-1,5-lactone + NADH + H(+). It catalyses the reaction D-glucose + NADP(+) = D-glucono-1,5-lactone + NADPH + H(+). This Priestia megaterium (Bacillus megaterium) protein is Glucose 1-dehydrogenase 2 (gdhII).